Reading from the N-terminus, the 167-residue chain is Nascent polypeptide-associated complex subunit beta (167 aa).

Disordered stretches follow at residues 1-48 (MDQA…GADD) and 133-167 (QNMQKNQAGAEGKKDDEEDDIPDLVEGQDFESKVE). Positions 25 to 42 (NRNRGKGTPRRKVKKVHK) are enriched in basic residues. The NAC-A/B domain maps to 45 to 110 (GADDKKLQAT…GEEKELTELV (66 aa)). A compositionally biased stretch (acidic residues) spans 148 to 161 (DEEDDIPDLVEGQD).

The protein belongs to the NAC-beta family. In terms of assembly, part of the nascent polypeptide-associated complex (NAC), consisting of egd2 and egd1. NAC associates with ribosomes via egd1.

The protein localises to the cytoplasm. Its subcellular location is the nucleus. Functionally, component of the nascent polypeptide-associated complex (NAC), a dynamic component of the ribosomal exit tunnel, protecting the emerging polypeptides from interaction with other cytoplasmic proteins to ensure appropriate nascent protein targeting. The NAC complex also promotes mitochondrial protein import by enhancing productive ribosome interactions with the outer mitochondrial membrane and blocks the inappropriate interaction of ribosomes translating non-secretory nascent polypeptides with translocation sites in the membrane of the endoplasmic reticulum. EGD1 may act as a transcription factor that exert a negative effect on the expression of several genes that are transcribed by RNA polymerase II. The polypeptide is Nascent polypeptide-associated complex subunit beta (egd1) (Aspergillus terreus (strain NIH 2624 / FGSC A1156)).